Reading from the N-terminus, the 168-residue chain is NADH-ubiquinone oxidoreductase chain 6 (168 aa).

The next 5 helical transmembrane spans lie at 1–21 (MKMM…VAFA), 27–47 (IYGG…VVSL), 50–70 (VFLG…VFGY), 87–107 (VVAF…YFMS), and 143–163 (WALA…LEVV).

Belongs to the complex I subunit 6 family. As to quaternary structure, core subunit of respiratory chain NADH dehydrogenase (Complex I) which is composed of 45 different subunits.

The protein localises to the mitochondrion inner membrane. It catalyses the reaction a ubiquinone + NADH + 5 H(+)(in) = a ubiquinol + NAD(+) + 4 H(+)(out). Core subunit of the mitochondrial membrane respiratory chain NADH dehydrogenase (Complex I) which catalyzes electron transfer from NADH through the respiratory chain, using ubiquinone as an electron acceptor. Essential for the catalytic activity and assembly of complex I. The chain is NADH-ubiquinone oxidoreductase chain 6 (MT-ND6) from Didelphis virginiana (North American opossum).